Reading from the N-terminus, the 145-residue chain is UPF0310 protein PH1033 (145 aa).

It belongs to the UPF0310 family.

The sequence is that of UPF0310 protein PH1033 from Pyrococcus horikoshii (strain ATCC 700860 / DSM 12428 / JCM 9974 / NBRC 100139 / OT-3).